We begin with the raw amino-acid sequence, 178 residues long: RNA-binding protein (178 aa).

The interval 113–178 (PKIGSKNKKT…KGKGKRGGKR (66 aa)) is disordered. The segment covering 168 to 178 (SKGKGKRGGKR) has biased composition (basic residues).

The protein belongs to the phytoreovirus RNA-binding protein family.

The protein localises to the host cytoplasm. In terms of biological role, constituent of viral factories. Binds to ssRNA and dsRNA. The chain is RNA-binding protein from Wound tumor virus (WTV).